Consider the following 125-residue polypeptide: Small ribosomal subunit protein eS8 (125 aa).

The disordered stretch occupies residues 1 to 34 (MQWQGRSVRKSTGGRYSPSRGKRRREIGSAPAET).

The protein belongs to the eukaryotic ribosomal protein eS8 family. Part of the 30S ribosomal subunit.

This Methanospirillum hungatei JF-1 (strain ATCC 27890 / DSM 864 / NBRC 100397 / JF-1) protein is Small ribosomal subunit protein eS8.